Here is a 294-residue protein sequence, read N- to C-terminus: NAD kinase (294 aa).

Residue Asp72 is the Proton acceptor of the active site. NAD(+) is bound by residues 72-73 (DG), 146-147 (ND), Arg157, Arg174, Asp176, 187-192 (TAYSLS), and Gln247.

This sequence belongs to the NAD kinase family. A divalent metal cation is required as a cofactor.

It localises to the cytoplasm. It catalyses the reaction NAD(+) + ATP = ADP + NADP(+) + H(+). Functionally, involved in the regulation of the intracellular balance of NAD and NADP, and is a key enzyme in the biosynthesis of NADP. Catalyzes specifically the phosphorylation on 2'-hydroxyl of the adenosine moiety of NAD to yield NADP. This is NAD kinase from Marinobacter nauticus (strain ATCC 700491 / DSM 11845 / VT8) (Marinobacter aquaeolei).